The chain runs to 389 residues: Succinate--CoA ligase [ADP-forming] subunit beta (389 aa).

Positions 9 to 244 constitute an ATP-grasp domain; sequence KQLFAEYGLP…PSQEDEREAH (236 aa). Residues Lys46, 53–55, Glu99, Thr102, and Glu107 each bind ATP; that span reads GRG. Mg(2+) contacts are provided by Asn199 and Asp213. Residues Asn264 and 321–323 contribute to the substrate site; that span reads GIV.

Belongs to the succinate/malate CoA ligase beta subunit family. Heterotetramer of two alpha and two beta subunits. Mg(2+) serves as cofactor.

The enzyme catalyses succinate + ATP + CoA = succinyl-CoA + ADP + phosphate. It catalyses the reaction GTP + succinate + CoA = succinyl-CoA + GDP + phosphate. It functions in the pathway carbohydrate metabolism; tricarboxylic acid cycle; succinate from succinyl-CoA (ligase route): step 1/1. Succinyl-CoA synthetase functions in the citric acid cycle (TCA), coupling the hydrolysis of succinyl-CoA to the synthesis of either ATP or GTP and thus represents the only step of substrate-level phosphorylation in the TCA. The beta subunit provides nucleotide specificity of the enzyme and binds the substrate succinate, while the binding sites for coenzyme A and phosphate are found in the alpha subunit. The polypeptide is Succinate--CoA ligase [ADP-forming] subunit beta (Teredinibacter turnerae (strain ATCC 39867 / T7901)).